Reading from the N-terminus, the 168-residue chain is uncharacterized protein (168 aa).

A signal peptide spans 1 to 21 (MVYEVLAVVSGGLLGFGVTWA).

This is an uncharacterized protein from Archaeoglobus fulgidus (strain ATCC 49558 / DSM 4304 / JCM 9628 / NBRC 100126 / VC-16).